Consider the following 837-residue polypeptide: Phosphatidylinositol-glycan-specific phospholipase D (837 aa).

The first 23 residues, 1–23, serve as a signal peptide directing secretion; that stretch reads MSAGRLWSSLLLLLPLFCSKSSS. Residues Asn-94, Asn-267, Asn-287, Asn-303, and Asn-317 are each glycosylated (N-linked (GlcNAc...) asparagine). FG-GAP repeat units lie at residues 364-425, 431-492, 494-554, 561-619, 629-689, 701-767, and 785-837; these read SPSA…GLPP, NKEG…GRLS, SPNV…RNDK, EADW…SLGK, QSTI…GATR, ALLS…TLGD, and QYVL…FSSD. Residues Asn-477, Asn-496, Asn-586, Asn-599, and Asn-655 are each glycosylated (N-linked (GlcNAc...) asparagine).

This sequence belongs to the GPLD1 family. Monomer. As to expression, widely expressed.

The protein resides in the secreted. The enzyme catalyses a 6-(alpha-D-glucosaminyl)-1-(1,2-diacyl-sn-glycero-3-phospho)-1D-myo-inositol + H2O = 6-(alpha-D-glucosaminyl)-1D-myo-inositol + a 1,2-diacyl-sn-glycero-3-phosphate + H(+). In terms of biological role, this protein hydrolyzes the inositol phosphate linkage in proteins anchored by phosphatidylinositol glycans (GPI-anchor) thus releasing these proteins from the membrane. The chain is Phosphatidylinositol-glycan-specific phospholipase D (Gpld1) from Mus musculus (Mouse).